Consider the following 300-residue polypeptide: 4-hydroxy-tetrahydrodipicolinate synthase (300 aa).

T46 is a pyruvate binding site. Residue Y134 is the Proton donor/acceptor of the active site. The Schiff-base intermediate with substrate role is filled by K162. I207 contacts pyruvate.

Belongs to the DapA family. As to quaternary structure, homotetramer; dimer of dimers.

The protein resides in the cytoplasm. The enzyme catalyses L-aspartate 4-semialdehyde + pyruvate = (2S,4S)-4-hydroxy-2,3,4,5-tetrahydrodipicolinate + H2O + H(+). The protein operates within amino-acid biosynthesis; L-lysine biosynthesis via DAP pathway; (S)-tetrahydrodipicolinate from L-aspartate: step 3/4. In terms of biological role, catalyzes the condensation of (S)-aspartate-beta-semialdehyde [(S)-ASA] and pyruvate to 4-hydroxy-tetrahydrodipicolinate (HTPA). The sequence is that of 4-hydroxy-tetrahydrodipicolinate synthase from Protochlamydia amoebophila (strain UWE25).